The sequence spans 88 residues: Putative membrane protein insertion efficiency factor (88 aa).

This sequence belongs to the UPF0161 family.

The protein localises to the cell inner membrane. Could be involved in insertion of integral membrane proteins into the membrane. In Prochlorococcus marinus (strain MIT 9313), this protein is Putative membrane protein insertion efficiency factor.